We begin with the raw amino-acid sequence, 385 residues long: tRNA-specific 2-thiouridylase MnmA (385 aa).

Residues 12-19 (GLSGGVDS) and methionine 38 contribute to the ATP site. The interval 108-110 (NPD) is interaction with target base in tRNA. Cysteine 113 (nucleophile) is an active-site residue. The cysteines at positions 113 and 210 are disulfide-linked. Glycine 138 lines the ATP pocket. The interaction with tRNA stretch occupies residues 160 to 162 (KDQ). The Cysteine persulfide intermediate role is filled by cysteine 210.

The protein belongs to the MnmA/TRMU family.

The protein resides in the cytoplasm. The catalysed reaction is S-sulfanyl-L-cysteinyl-[protein] + uridine(34) in tRNA + AH2 + ATP = 2-thiouridine(34) in tRNA + L-cysteinyl-[protein] + A + AMP + diphosphate + H(+). Catalyzes the 2-thiolation of uridine at the wobble position (U34) of tRNA, leading to the formation of s(2)U34. The polypeptide is tRNA-specific 2-thiouridylase MnmA (Ureaplasma parvum serovar 3 (strain ATCC 27815 / 27 / NCTC 11736)).